A 127-amino-acid chain; its full sequence is Fluoride-specific ion channel FluC (127 aa).

4 helical membrane passes run 4–24 (LLLA…LLSM), 35–55 (LGTL…FAWF), 71–91 (TGFC…VFLL), and 103–123 (VFVN…LFSA). Residues Gly-75 and Thr-78 each coordinate Na(+).

The protein belongs to the fluoride channel Fluc/FEX (TC 1.A.43) family.

The protein resides in the cell inner membrane. The catalysed reaction is fluoride(in) = fluoride(out). Na(+) is not transported, but it plays an essential structural role and its presence is essential for fluoride channel function. Fluoride-specific ion channel. Important for reducing fluoride concentration in the cell, thus reducing its toxicity. In Escherichia coli O17:K52:H18 (strain UMN026 / ExPEC), this protein is Fluoride-specific ion channel FluC.